We begin with the raw amino-acid sequence, 80 residues long: MEPPKAIVKKPRLVKLGPVDPGVRRGRGFSLGELAEAGLDAKKARKLGLHVDTRRRTVHPWNVEALKKYIERLREAGVEV.

It belongs to the eukaryotic ribosomal protein eL13 family.

The chain is Large ribosomal subunit protein eL13 from Aeropyrum pernix (strain ATCC 700893 / DSM 11879 / JCM 9820 / NBRC 100138 / K1).